The chain runs to 151 residues: Deoxyuridine 5'-triphosphate nucleotidohydrolase (151 aa).

Substrate-binding positions include 70 to 72 (RSG), N83, 87 to 89 (LID), and M97.

This sequence belongs to the dUTPase family. Requires Mg(2+) as cofactor.

It catalyses the reaction dUTP + H2O = dUMP + diphosphate + H(+). It functions in the pathway pyrimidine metabolism; dUMP biosynthesis; dUMP from dCTP (dUTP route): step 2/2. In terms of biological role, this enzyme is involved in nucleotide metabolism: it produces dUMP, the immediate precursor of thymidine nucleotides and it decreases the intracellular concentration of dUTP so that uracil cannot be incorporated into DNA. The polypeptide is Deoxyuridine 5'-triphosphate nucleotidohydrolase (Pseudomonas aeruginosa (strain UCBPP-PA14)).